The primary structure comprises 336 residues: Cellodextrinase A (336 aa).

The active-site Proton donor is glutamate 141.

Belongs to the glycosyl hydrolase 5 (cellulase A) family.

Its subcellular location is the secreted. Functionally, crystalline cellulose degradation. The sequence is that of Cellodextrinase A (celA) from Ruminococcus flavefaciens.